Reading from the N-terminus, the 396-residue chain is Putative glutamate--cysteine ligase 2-2 (396 aa).

This sequence belongs to the glutamate--cysteine ligase type 2 family. YbdK subfamily.

It carries out the reaction L-cysteine + L-glutamate + ATP = gamma-L-glutamyl-L-cysteine + ADP + phosphate + H(+). In terms of biological role, ATP-dependent carboxylate-amine ligase which exhibits weak glutamate--cysteine ligase activity. In Mycolicibacterium smegmatis (strain ATCC 700084 / mc(2)155) (Mycobacterium smegmatis), this protein is Putative glutamate--cysteine ligase 2-2.